The following is a 436-amino-acid chain: UPF0597 protein YhaM (436 aa).

This sequence belongs to the UPF0597 family.

The protein is UPF0597 protein YhaM of Escherichia coli O7:K1 (strain IAI39 / ExPEC).